We begin with the raw amino-acid sequence, 404 residues long: Adenosylhomocysteinase (404 aa).

Residues Asp-114 and Glu-139 each coordinate substrate. An NAD(+)-binding site is contributed by 140–142 (TTT). Residues Lys-169 and Asp-173 each coordinate substrate. NAD(+)-binding positions include Asn-174, 203-208 (GYGWCG), Glu-226, Asn-261, 282-284 (AGH), and Asn-329.

This sequence belongs to the adenosylhomocysteinase family. It depends on NAD(+) as a cofactor.

The protein resides in the cytoplasm. It catalyses the reaction S-adenosyl-L-homocysteine + H2O = L-homocysteine + adenosine. It participates in amino-acid biosynthesis; L-homocysteine biosynthesis; L-homocysteine from S-adenosyl-L-homocysteine: step 1/1. May play a key role in the regulation of the intracellular concentration of adenosylhomocysteine. The chain is Adenosylhomocysteinase from Thermotoga maritima (strain ATCC 43589 / DSM 3109 / JCM 10099 / NBRC 100826 / MSB8).